Consider the following 129-residue polypeptide: Glycine cleavage system H protein (129 aa).

Positions 24–106 constitute a Lipoyl-binding domain; sequence LLKIGVSEFA…IGEGWLVILK (83 aa). K65 carries the post-translational modification N6-lipoyllysine.

This sequence belongs to the GcvH family. In terms of assembly, the glycine cleavage system is composed of four proteins: P, T, L and H. The cofactor is (R)-lipoate.

The glycine cleavage system catalyzes the degradation of glycine. The H protein shuttles the methylamine group of glycine from the P protein to the T protein. The polypeptide is Glycine cleavage system H protein (Prochlorococcus marinus (strain AS9601)).